The following is a 182-amino-acid chain: MAKYYLIHGVVEDKPEKIVKILSDGYLFASSYSTQQGFSGIPLDYVYFSRLGDVNVFMGGFKFILSTKILYKRSFRYALNWVGSDINRTTKINYRYDNVDKVLDEINTHITNGTYSLSPSIDTLHEIILKKKVNLHRYLVAVSDGNYLTPEITDYLKTNYPNVKILTEIPSSADKLSEILEK.

It belongs to the mimivirus L28/L54 family.

This is an uncharacterized protein from Acanthamoeba polyphaga (Amoeba).